The chain runs to 222 residues: Charged multivesicular body protein 4a (222 aa).

2 disordered regions span residues 1–21 and 177–222; these read MSGL…TPEE and LLHV…EWVS. Residues 1–116 are interaction with phosphoinosides; sequence MSGLGRLFGR…ELAAQGLKKA (116 aa). The segment at 1-150 is intramolecular interaction with C-terminus; that stretch reads MSGLGRLFGR…QISDAISRPV (150 aa). 2 coiled-coil regions span residues 20-105 and 155-180; these read EEAI…VLRT and DVDE…LLHV. Residues 151-222 are intramolecular interaction with N-terminus; sequence GFGDDVDEDE…ELKQLAEWVS (72 aa). Position 196 is a phosphoserine (Ser196).

This sequence belongs to the SNF7 family. As to quaternary structure, probable core component of the endosomal sorting required for transport complex III (ESCRT-III). ESCRT-III components are thought to multimerize to form a flat lattice on the perimeter membrane of the endosome. Several assembly forms of ESCRT-III may exist that interact and act sequentially. Self-associates; overexpression leads to the assembly of filaments that curve and associate to create circular rings. Interacts with CHMP2A. Interacts with CHMP3; the interaction requires the release of CHMP4A autoinhibition. Interacts with CHMP4B. Interacts with CHMP4C. Interacts with CHMP6. Interacts with VPS4A. Interacts with PDCD6IP; the interaction is direct.

It is found in the cytoplasmic vesicle membrane. It localises to the late endosome membrane. Its function is as follows. Probable core component of the endosomal sorting required for transport complex III (ESCRT-III) which is involved in multivesicular bodies (MVBs) formation and sorting of endosomal cargo proteins into MVBs. MVBs contain intraluminal vesicles (ILVs) that are generated by invagination and scission from the limiting membrane of the endosome and mostly are delivered to lysosomes enabling degradation of membrane proteins, such as stimulated growth factor receptors, lysosomal enzymes and lipids. The MVB pathway appears to require the sequential function of ESCRT-O, -I,-II and -III complexes. ESCRT-III proteins mostly dissociate from the invaginating membrane before the ILV is released. The ESCRT machinery also functions in topologically equivalent membrane fission events, such as the terminal stages of cytokinesis and the budding of enveloped viruses (lentiviruses). ESCRT-III proteins are believed to mediate the necessary vesicle extrusion and/or membrane fission activities, possibly in conjunction with the AAA ATPase VPS4. When overexpressed, membrane-assembled circular arrays of CHMP4A filaments can promote or stabilize negative curvature and outward budding. CHMP4A/B/C are required for the exosomal release of SDCBP, CD63 and syndecan. In Bos taurus (Bovine), this protein is Charged multivesicular body protein 4a (CHMP4A).